The sequence spans 209 residues: Regulator of G-protein signaling 1 (209 aa).

The RGS domain occupies 85–200 (SLEKLLANQT…LKSDIYLNLL (116 aa)).

Interacts with GNAI1 and GNAQ. In terms of tissue distribution, detected in peripheral blood monocytes. Expression is relatively low in B-cells and chronic lymphocytic leukemia B-cells; however, in other types of malignant B-cell such as non-Hodgkin lymphoma and hairy cell leukemia, expression is constitutively high.

It is found in the cell membrane. It localises to the cytoplasm. The protein resides in the cytosol. Its function is as follows. Regulates G protein-coupled receptor signaling cascades, including signaling downstream of the N-formylpeptide chemoattractant receptors and leukotriene receptors. Inhibits B cell chemotaxis toward CXCL12. Inhibits signal transduction by increasing the GTPase activity of G protein alpha subunits thereby driving them into their inactive GDP-bound form. This chain is Regulator of G-protein signaling 1 (RGS1), found in Homo sapiens (Human).